Here is a 787-residue protein sequence, read N- to C-terminus: LPS-assembly protein LptD (787 aa).

The first 24 residues, 1-24 (MKKSFPTLLATLVWSALYSQHALA), serve as a signal peptide directing secretion.

It belongs to the LptD family. Component of the lipopolysaccharide transport and assembly complex. Interacts with LptE and LptA.

It localises to the cell outer membrane. Together with LptE, is involved in the assembly of lipopolysaccharide (LPS) at the surface of the outer membrane. The chain is LPS-assembly protein LptD from Pectobacterium atrosepticum (strain SCRI 1043 / ATCC BAA-672) (Erwinia carotovora subsp. atroseptica).